We begin with the raw amino-acid sequence, 98 residues long: Putative pterin-4-alpha-carbinolamine dehydratase (98 aa).

This sequence belongs to the pterin-4-alpha-carbinolamine dehydratase family.

The enzyme catalyses (4aS,6R)-4a-hydroxy-L-erythro-5,6,7,8-tetrahydrobiopterin = (6R)-L-erythro-6,7-dihydrobiopterin + H2O. In Jannaschia sp. (strain CCS1), this protein is Putative pterin-4-alpha-carbinolamine dehydratase.